Here is a 94-residue protein sequence, read N- to C-terminus: Large ribosomal subunit protein uL29 (94 aa).

The tract at residues 65–94 is disordered; sequence ANPGERKSRVFSRAKRKKKNLARLSAKAKG. The span at 73-94 shows a compositional bias: basic residues; the sequence is RVFSRAKRKKKNLARLSAKAKG.

Belongs to the universal ribosomal protein uL29 family.

This chain is Large ribosomal subunit protein uL29, found in Leptospira interrogans serogroup Icterohaemorrhagiae serovar copenhageni (strain Fiocruz L1-130).